We begin with the raw amino-acid sequence, 430 residues long: MSTNTDDTTRTDGTFGDYGGQYVPEVLMPAVEELTDAYERYVLDNEDGFVDDFRQRIRSFGGRPTPLTHAPTLSQRHGVDVYLKREDLLHGGAHKLNNALGQVLLAKYMGKDRIVAETGAGQHGTATAMACAALEMPCEIYMGRTDVNRQRPNVFRMRLHDADVNPVTVGSGTLKEAINETMRDWATNVADTHYVIGSVVGPHPFPSMVRDFQAIISEELRAQSREQLGELPAAVIACAGGGSNTMGAFGAFVGSASLPGAPAGTHEPAPDVDLLAVEAGGSRLGVDDDAGYAPNSASLSTGTEGVLHGARTKLLQTETGQIVESHSVSAGLDYAGVGPELAHLVDTGRITPTNVDDDAALAAFHRLSRDEGVIPALETSHAVAALDQYDGDGPVVVNVSGRGDKDLDTVIEASAANDIDAAPDMEVFEQ.

Residue K95 is modified to N6-(pyridoxal phosphate)lysine.

Belongs to the TrpB family. In terms of assembly, tetramer of two alpha and two beta chains. It depends on pyridoxal 5'-phosphate as a cofactor.

It catalyses the reaction (1S,2R)-1-C-(indol-3-yl)glycerol 3-phosphate + L-serine = D-glyceraldehyde 3-phosphate + L-tryptophan + H2O. It participates in amino-acid biosynthesis; L-tryptophan biosynthesis; L-tryptophan from chorismate: step 5/5. Functionally, the beta subunit is responsible for the synthesis of L-tryptophan from indole and L-serine. This chain is Tryptophan synthase beta chain, found in Halobacterium salinarum (strain ATCC 29341 / DSM 671 / R1).